Here is a 430-residue protein sequence, read N- to C-terminus: Putative golgin subfamily A member 8D (430 aa).

Positions 2–217 (EWKLEQSMRE…LTAQLSLMAL (216 aa)) form a coiled coil. 4 disordered regions span residues 138–158 (LREQ…QEER), 217–239 (LPGE…RPMP), 290–331 (PITK…GVAA), and 382–406 (PVQG…QDHQ). Residues 222-235 (HGGEHLDSEGEEAP) are compositionally biased toward basic and acidic residues. Over residues 303–316 (PGGGHHQAGPGQGG) the composition is skewed to gly residues.

The protein belongs to the GOLGA8 family.

The protein is Putative golgin subfamily A member 8D (GOLGA8DP) of Homo sapiens (Human).